The following is a 103-amino-acid chain: Large ribosomal subunit protein bL21 (103 aa).

The protein belongs to the bacterial ribosomal protein bL21 family. As to quaternary structure, part of the 50S ribosomal subunit. Contacts protein L20.

Functionally, this protein binds to 23S rRNA in the presence of protein L20. This chain is Large ribosomal subunit protein bL21, found in Lactobacillus helveticus (strain DPC 4571).